Reading from the N-terminus, the 271-residue chain is Keratin-associated protein 10-5 (271 aa).

Tandem repeats lie at residues 26 to 30, 51 to 55, 73 to 77, 78 to 82, 88 to 92, 93 to 97, 98 to 102, 110 to 114, 120 to 124, 130 to 134, 135 to 139, 140 to 144, 152 to 156, 162 to 166, 177 to 181, 187 to 191, 199 to 203, 209 to 213, 214 to 218, 233 to 237, 240 to 244, and 251 to 255. The tract at residues 26–255 is 22 X 5 AA repeats of C-C-X(3); sequence CCEPPCGTAP…SYQASCCRPA (230 aa).

Belongs to the KRTAP type 10 family. As to quaternary structure, interacts with hair keratins. In terms of tissue distribution, restricted to a narrow region of the hair fiber cuticle, lying approximately 20 cell layers above the apex of the dermal papilla of the hair root; not detected in any other tissues.

In terms of biological role, in the hair cortex, hair keratin intermediate filaments are embedded in an interfilamentous matrix, consisting of hair keratin-associated proteins (KRTAP), which are essential for the formation of a rigid and resistant hair shaft through their extensive disulfide bond cross-linking with abundant cysteine residues of hair keratins. The matrix proteins include the high-sulfur and high-glycine-tyrosine keratins. This Homo sapiens (Human) protein is Keratin-associated protein 10-5 (KRTAP10-5).